The following is a 759-amino-acid chain: 1,4-alpha-glucan branching enzyme GlgB (759 aa).

The tract at residues 1–22 is disordered; that stretch reads MAKTKGLPKDTAVTPSPHLRPH. Asp-422 acts as the Nucleophile in catalysis. Glu-475 serves as the catalytic Proton donor.

Belongs to the glycosyl hydrolase 13 family. GlgB subfamily. In terms of assembly, monomer.

It catalyses the reaction Transfers a segment of a (1-&gt;4)-alpha-D-glucan chain to a primary hydroxy group in a similar glucan chain.. It functions in the pathway glycan biosynthesis; glycogen biosynthesis. In terms of biological role, catalyzes the formation of the alpha-1,6-glucosidic linkages in glycogen by scission of a 1,4-alpha-linked oligosaccharide from growing alpha-1,4-glucan chains and the subsequent attachment of the oligosaccharide to the alpha-1,6 position. The sequence is that of 1,4-alpha-glucan branching enzyme GlgB from Mycobacterium sp. (strain KMS).